Reading from the N-terminus, the 459-residue chain is Putrescine aminotransferase (459 aa).

Residues 150-151 (GT) and Q274 contribute to the pyridoxal 5'-phosphate site. K300 is modified (N6-(pyridoxal phosphate)lysine). Pyridoxal 5'-phosphate is bound at residue T332.

The protein belongs to the class-III pyridoxal-phosphate-dependent aminotransferase family. Putrescine aminotransferase subfamily. Pyridoxal 5'-phosphate serves as cofactor.

It catalyses the reaction an alkane-alpha,omega-diamine + 2-oxoglutarate = an omega-aminoaldehyde + L-glutamate. The enzyme catalyses putrescine + 2-oxoglutarate = 1-pyrroline + L-glutamate + H2O. It carries out the reaction cadaverine + 2-oxoglutarate = 5-aminopentanal + L-glutamate. The protein operates within amine and polyamine degradation; putrescine degradation; 4-aminobutanal from putrescine (transaminase route): step 1/1. Catalyzes the aminotransferase reaction from putrescine to 2-oxoglutarate, leading to glutamate and 4-aminobutanal, which spontaneously cyclizes to form 1-pyrroline. This is the first step in one of two pathways for putrescine degradation, where putrescine is converted into 4-aminobutanoate (gamma-aminobutyrate or GABA) via 4-aminobutanal. Also functions as a cadaverine transaminase in a a L-lysine degradation pathway to succinate that proceeds via cadaverine, glutarate and L-2-hydroxyglutarate. The polypeptide is Putrescine aminotransferase (Escherichia coli O6:H1 (strain CFT073 / ATCC 700928 / UPEC)).